The primary structure comprises 288 residues: Ras-like protein 1 (288 aa).

11 to 18 provides a ligand contact to GTP; that stretch reads GGGGVGKS. Residues 33–41 carry the Effector region motif; sequence YDPTIEDSY. GTP is bound by residues 58 to 62 and 117 to 120; these read DTAGQ and NKCD. The segment at 176 to 288 is disordered; sequence EKQQQQQQQQ…KSKNGCCVIV (113 aa). Composition is skewed to low complexity over residues 178–216 and 246–281; these read QQQQ…NNNN and PNQS…SKSK. A lipid anchor (S-palmitoyl cysteine) is attached at C284. C285 is modified (cysteine methyl ester). The S-farnesyl cysteine moiety is linked to residue C285. Positions 286–288 are cleaved as a propeptide — removed in mature form; that stretch reads VIV.

This sequence belongs to the small GTPase superfamily. Ras family.

The protein resides in the cell membrane. It catalyses the reaction GTP + H2O = GDP + phosphate + H(+). Alternates between an inactive form bound to GDP and an active form bound to GTP. Activated by a guanine nucleotide-exchange factor (GEF) and inactivated by a GTPase-activating protein (GAP). Functionally, required for the regulation of both a MAP kinase signaling pathway and a cAMP signaling pathway. The activation of these pathways contributes to the pathogenicity of the cells through the induction of the morphological transition from the yeast to the polarized filamentous form. The polypeptide is Ras-like protein 1 (RAS1) (Candida albicans (strain WO-1) (Yeast)).